The chain runs to 114 residues: MKFQYALAKEQLGSNSRSGVKKLISKHHWLPEYYFSDLSFSVVQQWDSRAIEKTTIISCMRPANQEIYPLRHCETLRSQPCSLFSSLYARSFQSSCTLHVAEPSPGFHMYGCHT.

This is an uncharacterized protein from Saccharomyces cerevisiae (strain ATCC 204508 / S288c) (Baker's yeast).